Here is a 120-residue protein sequence, read N- to C-terminus: Phosphoribosyl-AMP cyclohydrolase (120 aa).

A Mg(2+)-binding site is contributed by Asp75. Cys76 is a Zn(2+) binding site. Mg(2+) is bound by residues Asp77 and Asp79. Positions 92 and 99 each coordinate Zn(2+).

It belongs to the PRA-CH family. As to quaternary structure, homodimer. It depends on Mg(2+) as a cofactor. The cofactor is Zn(2+).

The protein resides in the cytoplasm. It catalyses the reaction 1-(5-phospho-beta-D-ribosyl)-5'-AMP + H2O = 1-(5-phospho-beta-D-ribosyl)-5-[(5-phospho-beta-D-ribosylamino)methylideneamino]imidazole-4-carboxamide. The protein operates within amino-acid biosynthesis; L-histidine biosynthesis; L-histidine from 5-phospho-alpha-D-ribose 1-diphosphate: step 3/9. In terms of biological role, catalyzes the hydrolysis of the adenine ring of phosphoribosyl-AMP. In Methanosarcina acetivorans (strain ATCC 35395 / DSM 2834 / JCM 12185 / C2A), this protein is Phosphoribosyl-AMP cyclohydrolase.